Consider the following 287-residue polypeptide: Pantothenate synthetase (287 aa).

ATP is bound at residue 30-37 (MGALHEGH). Histidine 37 (proton donor) is an active-site residue. Glutamine 61 contacts (R)-pantoate. Residue glutamine 61 participates in beta-alanine binding. 147-150 (GEKD) contributes to the ATP binding site. Glutamine 153 lines the (R)-pantoate pocket. Residue 184–187 (MSSR) participates in ATP binding.

Belongs to the pantothenate synthetase family. As to quaternary structure, homodimer.

It is found in the cytoplasm. It carries out the reaction (R)-pantoate + beta-alanine + ATP = (R)-pantothenate + AMP + diphosphate + H(+). It participates in cofactor biosynthesis; (R)-pantothenate biosynthesis; (R)-pantothenate from (R)-pantoate and beta-alanine: step 1/1. Catalyzes the condensation of pantoate with beta-alanine in an ATP-dependent reaction via a pantoyl-adenylate intermediate. This is Pantothenate synthetase from Granulibacter bethesdensis (strain ATCC BAA-1260 / CGDNIH1).